The following is a 370-amino-acid chain: tRNA (guanine(9)-/adenine(9)-N1)-methyltransferase (370 aa).

Residues 87–292 (TPEELREKLP…KELPKRATRY (206 aa)) enclose the SAM-dependent MTase TRM10-type domain.

Belongs to the class IV-like SAM-binding methyltransferase superfamily. TRM10 family.

Its subcellular location is the cytoplasm. The catalysed reaction is adenosine(9) in tRNA + S-adenosyl-L-methionine = N(1)-methyladenosine(9) in tRNA + S-adenosyl-L-homocysteine + H(+). It carries out the reaction guanosine(9) in tRNA + S-adenosyl-L-methionine = N(1)-methylguanosine(9) in tRNA + S-adenosyl-L-homocysteine + H(+). Functionally, catalyzes the S-adenosyl-L-methionine-dependent formation of either N(1)-methyladenine or N(1)-methylguanine at position 9 (m1A9 or m1G9) in tRNA. This chain is tRNA (guanine(9)-/adenine(9)-N1)-methyltransferase, found in Thermococcus kodakarensis (strain ATCC BAA-918 / JCM 12380 / KOD1) (Pyrococcus kodakaraensis (strain KOD1)).